A 144-amino-acid chain; its full sequence is Large ribosomal subunit protein uL13 (144 aa).

This sequence belongs to the universal ribosomal protein uL13 family. Part of the 50S ribosomal subunit.

Functionally, this protein is one of the early assembly proteins of the 50S ribosomal subunit, although it is not seen to bind rRNA by itself. It is important during the early stages of 50S assembly. The chain is Large ribosomal subunit protein uL13 from Herpetosiphon aurantiacus (strain ATCC 23779 / DSM 785 / 114-95).